A 192-amino-acid polypeptide reads, in one-letter code: NADH-quinone oxidoreductase subunit B 1 (192 aa).

Positions 71, 72, 136, and 166 each coordinate [4Fe-4S] cluster.

The protein belongs to the complex I 20 kDa subunit family. NDH-1 is composed of 14 different subunits. Subunits NuoB, C, D, E, F, and G constitute the peripheral sector of the complex. [4Fe-4S] cluster is required as a cofactor.

It is found in the cell inner membrane. It catalyses the reaction a quinone + NADH + 5 H(+)(in) = a quinol + NAD(+) + 4 H(+)(out). In terms of biological role, NDH-1 shuttles electrons from NADH, via FMN and iron-sulfur (Fe-S) centers, to quinones in the respiratory chain. The immediate electron acceptor for the enzyme in this species is believed to be ubiquinone. Couples the redox reaction to proton translocation (for every two electrons transferred, four hydrogen ions are translocated across the cytoplasmic membrane), and thus conserves the redox energy in a proton gradient. The protein is NADH-quinone oxidoreductase subunit B 1 of Rhizobium meliloti (strain 1021) (Ensifer meliloti).